The primary structure comprises 1056 residues: RNA cytidine acetyltransferase (1056 aa).

ATP is bound at residue 286–295 (GRGKSAALGI). A compositionally biased stretch (polar residues) spans 433–446 (QNNTSGRESTQTAV). Residues 433-463 (QNNTSGRESTQTAVVSRDNKEKDSHLHSQSR) form a disordered region. Over residues 449 to 463 (RDNKEKDSHLHSQSR) the composition is skewed to basic and acidic residues. Position 475 (arginine 475) interacts with ATP. One can recognise an N-acetyltransferase domain in the interval 566–706 (VLLPPIDPKD…VKLRDAKTLP (141 aa)). Acetyl-CoA-binding positions include 638 to 640 (IAT), 645 to 651 (ASMGYGS), and asparagine 739. A phosphoserine mark is found at serine 1001, serine 1007, and serine 1010.

The protein belongs to the RNA cytidine acetyltransferase family. NAT10 subfamily. Interacts with TAN1. Associates with 90S pre-ribosomal particles.

It localises to the nucleus. It is found in the nucleolus. It carries out the reaction a cytidine in 18S rRNA + acetyl-CoA + ATP + H2O = an N(4)-acetylcytidine in 18S rRNA + ADP + phosphate + CoA + H(+). The enzyme catalyses a cytidine in tRNA + acetyl-CoA + ATP + H2O = an N(4)-acetylcytidine in tRNA + ADP + phosphate + CoA + H(+). Functionally, RNA cytidine acetyltransferase with specificity toward both 18S rRNA and tRNAs. Catalyzes the formation of N(4)-acetylcytidine (ac4C) at positions 1280 and 1773 in 18S rRNA. Required for early nucleolar cleavages of precursor rRNA at sites A0, A1 and A2 during 18S rRNA synthesis. Catalyzes the formation of ac4C at position 12 in serine and leucine tRNAs. Requires the tRNA-binding adapter protein TAN1 for full tRNA acetyltransferase activity but not for 18S rRNA acetylation. This is RNA cytidine acetyltransferase from Saccharomyces cerevisiae (strain ATCC 204508 / S288c) (Baker's yeast).